A 349-amino-acid polypeptide reads, in one-letter code: Mitogen-activated protein kinase sty1 (349 aa).

The Protein kinase domain occupies 20–299 (YSDLQPIGMG…AADALAHNYL (280 aa)). ATP-binding positions include 26 to 34 (IGMGAFGLV) and lysine 49. Aspartate 141 acts as the Proton acceptor in catalysis. Threonine 171 carries the post-translational modification Phosphothreonine. The TXY signature appears at 171–173 (TGY). The residue at position 173 (tyrosine 173) is a Phosphotyrosine. Serine 175 is subject to Phosphoserine. Threonine 176 is modified (phosphothreonine). The TXY signature appears at 176-178 (TRY).

This sequence belongs to the protein kinase superfamily. Ser/Thr protein kinase family. MAP kinase subfamily. HOG1 sub-subfamily. In terms of assembly, interacts with cdc37, cmk2, hal4, sin1 and srk1. The cofactor is Mg(2+). Post-translationally, dually phosphorylated on Thr-171 and Tyr-173, which activates the enzyme. Phosphorylated by wis1 in response to osmotic stress, nutrient limitation, hydrogen peroxide and arsenite. Dephosphorylated by pyp1 and pyp2.

The protein localises to the cytoplasm. Its subcellular location is the nucleus. It carries out the reaction L-seryl-[protein] + ATP = O-phospho-L-seryl-[protein] + ADP + H(+). It catalyses the reaction L-threonyl-[protein] + ATP = O-phospho-L-threonyl-[protein] + ADP + H(+). With respect to regulation, activated by the MAPK kinase wisl, and negatively regulated by pypl and pyp2 tyrosine phosphatases. Proline-directed serine/threonine-protein kinase involved in a signal transduction pathway that is activated by changes in the osmolarity of the extracellular environment. Controls osmotic regulation of transcription of target genes. Involved in osmoregulation and stress response pathways leading to an efficient start of sexual differentiation. Supports translation initiation and facilitates adaptation to environmental stress in part through reducing eIF2-alpha phosphorylation. Links the cell-cycle G2/M control with changes in the extracellular environment that affect cell physiology. Phosphorylates atf1 and mkp1. In conjunction with hal4, has a role in the cellular resistance to toxic cations such as Na(+), Li(+) and Ca(2+). Involved in resistance to arsenite, methylglyoxal and hydrogen peroxide. Involved in induction of thermotolerance in mRNA export, as well as in vacuolar fission. The chain is Mitogen-activated protein kinase sty1 (sty1) from Schizosaccharomyces pombe (strain 972 / ATCC 24843) (Fission yeast).